Reading from the N-terminus, the 132-residue chain is MNEKEKIIEYWRRRARECLDDAKLLLKNERLHSAVNRIYYALFYQVSALLLAKGLSFSKHSGVLAAFNREFVKTGKVNKELGKFYNRMFEHRKTGDYGELVEFEEENVKDWIRKAEGFLDAIEKLIEDLKRA.

It belongs to the UPF0332 family.

The protein is UPF0332 protein TM_1000 of Thermotoga maritima (strain ATCC 43589 / DSM 3109 / JCM 10099 / NBRC 100826 / MSB8).